The sequence spans 380 residues: Protein Wnt-5a (380 aa).

An N-terminal signal peptide occupies residues Met1–Ser35. A propeptide spanning residues Phe36 to Tyr61 is cleaved from the precursor. A disulfide bridge links Cys104 with Cys115. N-linked (GlcNAc...) asparagine glycosylation is found at Asn114 and Asn120. Disulfide bonds link Cys154–Cys162, Cys164–Cys182, Cys238–Cys252, Cys240–Cys247, Cys309–Cys340, Cys325–Cys335, Cys339–Cys379, Cys355–Cys370, Cys357–Cys367, and Cys362–Cys363. A lipid anchor (O-palmitoleoyl serine; by PORCN) is attached at Ser244. N-linked (GlcNAc...) asparagine glycans are attached at residues Asn312 and Asn326.

The protein belongs to the Wnt family. Forms a soluble 1:1 complex with AFM; this prevents oligomerization and is required for prolonged biological activity. The complex with AFM may represent the physiological form in body fluids. Homooligomer; disulfide-linked, leading to inactivation (in vitro). Interacts with PORCN. Interacts with WLS. Interacts with glypican GCP3. Interacts with PKD1 (via extracellular domain). Interacts with TMEM67. Glycosylation is necessary for secretion but not for activity. In terms of processing, palmitoleoylation is required for efficient binding to frizzled receptors. Depalmitoleoylation leads to Wnt signaling pathway inhibition. Post-translationally, proteolytic processing by TIKI1 and TIKI2 promotes oxidation and formation of large disulfide-bond oligomers, leading to inactivation of WNT5A. As to expression, expression is increased in differentiated thyroid carcinomas compared to normal thyroid tissue and anaplastic thyroid tumors where expression is low or undetectable. Expression is found in thyrocytes but not in stromal cells (at protein level). Detected in neonate heart and lung.

It localises to the secreted. The protein localises to the extracellular space. The protein resides in the extracellular matrix. In terms of biological role, ligand for members of the frizzled family of seven transmembrane receptors. Can activate or inhibit canonical Wnt signaling, depending on receptor context. In the presence of FZD4, activates beta-catenin signaling. In the presence of ROR2, inhibits the canonical Wnt pathway by promoting beta-catenin degradation through a GSK3-independent pathway which involves down-regulation of beta-catenin-induced reporter gene expression. Suppression of the canonical pathway allows chondrogenesis to occur and inhibits tumor formation. Stimulates cell migration. Decreases proliferation, migration, invasiveness and clonogenicity of carcinoma cells and may act as a tumor suppressor. Mediates motility of melanoma cells. Required during embryogenesis for extension of the primary anterior-posterior axis and for outgrowth of limbs and the genital tubercle. Inhibits type II collagen expression in chondrocytes. The chain is Protein Wnt-5a (WNT5A) from Homo sapiens (Human).